A 112-amino-acid polypeptide reads, in one-letter code: Tetracenomycin-F1 monooxygenase (112 aa).

Residues Phe11 to Val100 enclose the ABM domain.

In terms of assembly, homotrimer.

It carries out the reaction tetracenomycin F1 + O2 = tetracenomycin D3 + H2O + H(+). It participates in antibiotic biosynthesis; tetracenomycin C biosynthesis. With respect to regulation, inhibited by p-chloromercuribenzoic acid, N-ethylmaleimide and diethyl pyrocarbonate. Its function is as follows. Oxygenase required for conversion of tetracenomycin F1 to tetracenomycin D3. The sequence is that of Tetracenomycin-F1 monooxygenase (tcmH) from Streptomyces glaucescens.